The following is a 201-amino-acid chain: Recombination protein RecR (201 aa).

The C4-type zinc finger occupies 56–71 (CKICFNVSSDEVCQYC). One can recognise a Toprim domain in the interval 79-174 (SMICVVEESK…TVSRLASGLP (96 aa)).

It belongs to the RecR family.

Its function is as follows. May play a role in DNA repair. It seems to be involved in an RecBC-independent recombinational process of DNA repair. It may act with RecF and RecO. The sequence is that of Recombination protein RecR from Cutibacterium acnes (strain DSM 16379 / KPA171202) (Propionibacterium acnes).